A 383-amino-acid polypeptide reads, in one-letter code: tRNA-specific 2-thiouridylase MnmA (383 aa).

ATP is bound by residues 9–16 (GMSGGVDS) and M35. An interaction with target base in tRNA region spans residues 95–97 (NPD). The active-site Nucleophile is the C100. An intrachain disulfide couples C100 to C196. Residue G124 participates in ATP binding. The tract at residues 146–148 (KDQ) is interaction with tRNA. The active-site Cysteine persulfide intermediate is the C196. The tract at residues 308–309 (RY) is interaction with tRNA.

Belongs to the MnmA/TRMU family.

The protein localises to the cytoplasm. The catalysed reaction is S-sulfanyl-L-cysteinyl-[protein] + uridine(34) in tRNA + AH2 + ATP = 2-thiouridine(34) in tRNA + L-cysteinyl-[protein] + A + AMP + diphosphate + H(+). Its function is as follows. Catalyzes the 2-thiolation of uridine at the wobble position (U34) of tRNA, leading to the formation of s(2)U34. This Burkholderia pseudomallei (strain 1106a) protein is tRNA-specific 2-thiouridylase MnmA.